We begin with the raw amino-acid sequence, 322 residues long: Probable F-box protein At1g60180 (322 aa).

The F-box domain maps to 45–88 (FCELSDECIAKILSGCPILESLTLSHCIYLTVLDLSKSLRLRTL).

This is Probable F-box protein At1g60180 from Arabidopsis thaliana (Mouse-ear cress).